A 184-amino-acid chain; its full sequence is Large ribosomal subunit protein uL5 (184 aa).

The protein belongs to the universal ribosomal protein uL5 family. In terms of assembly, part of the 50S ribosomal subunit; part of the 5S rRNA/L5/L18/L25 subcomplex. Contacts the 5S rRNA and the P site tRNA. Forms a bridge to the 30S subunit in the 70S ribosome.

Its function is as follows. This is one of the proteins that bind and probably mediate the attachment of the 5S RNA into the large ribosomal subunit, where it forms part of the central protuberance. In the 70S ribosome it contacts protein S13 of the 30S subunit (bridge B1b), connecting the 2 subunits; this bridge is implicated in subunit movement. Contacts the P site tRNA; the 5S rRNA and some of its associated proteins might help stabilize positioning of ribosome-bound tRNAs. This chain is Large ribosomal subunit protein uL5, found in Syntrophotalea carbinolica (strain DSM 2380 / NBRC 103641 / GraBd1) (Pelobacter carbinolicus).